A 494-amino-acid chain; its full sequence is Chromosomal replication initiator protein DnaA (494 aa).

The segment at M1–M103 is domain I, interacts with DnaA modulators. The interval M103–S148 is domain II. The interval P149–Q371 is domain III, AAA+ region. ATP is bound by residues G195, G197, K198, and T199. Residues S372 to A494 are domain IV, binds dsDNA.

Belongs to the DnaA family. As to quaternary structure, oligomerizes as a right-handed, spiral filament on DNA at oriC.

The protein resides in the cytoplasm. Functionally, plays an essential role in the initiation and regulation of chromosomal replication. ATP-DnaA binds to the origin of replication (oriC) to initiate formation of the DNA replication initiation complex once per cell cycle. Binds the DnaA box (a 9 base pair repeat at the origin) and separates the double-stranded (ds)DNA. Forms a right-handed helical filament on oriC DNA; dsDNA binds to the exterior of the filament while single-stranded (ss)DNA is stabiized in the filament's interior. The ATP-DnaA-oriC complex binds and stabilizes one strand of the AT-rich DNA unwinding element (DUE), permitting loading of DNA polymerase. After initiation quickly degrades to an ADP-DnaA complex that is not apt for DNA replication. Binds acidic phospholipids. This chain is Chromosomal replication initiator protein DnaA, found in Bartonella quintana (strain Toulouse) (Rochalimaea quintana).